We begin with the raw amino-acid sequence, 167 residues long: Effector CFEM8 (167 aa).

Residues 1 to 17 (MQFSIVVMAALASLASA) form the signal peptide. Positions 18–112 (QSMDGIPTCA…TPAAAAPYPT (95 aa)) constitute a CFEM domain. 4 disulfide bridges follow: Cys-26–Cys-68, Cys-30–Cys-63, Cys-40–Cys-47, and Cys-49–Cys-85. Position 44 (Asp-44) interacts with heme. N-linked (GlcNAc...) asparagine glycosylation is found at Asn-117 and Asn-135. Gly-143 is lipidated: GPI-anchor amidated glycine. The propeptide at 144–167 (SAPQNVAGGLAGIFGLVVAAAFAL) is removed in mature form.

The protein belongs to the RBT5 family.

The protein localises to the cell membrane. Its subcellular location is the secreted. The protein resides in the host nucleus. It is found in the host cell membrane. Appears to function during host infection, and may play a role in suppressing the host immune response. This is Effector CFEM8 from Marssonina brunnea f. sp. multigermtubi (strain MB_m1) (Marssonina leaf spot fungus).